The primary structure comprises 234 residues: NLP effector protein 1 (234 aa).

The signal sequence occupies residues 1-18 (MQLRAFISVFASLACVNA). A glycan (N-linked (GlcNAc...) asparagine) is linked at Asn-66. Positions 102-112 (AFMYSWYMPKD) match the Conserved undecapeptide motif I motif. Residues 119 to 125 (GHRHDWE) carry the Hepta-peptide GHRHDWE motif II motif.

The protein belongs to the Necrosis inducing protein (NPP1) family.

It localises to the secreted. In terms of biological role, secreted effector that contributes to virulence during infection by P.capsici. Induces distinct chlorosis at 3 days after inoculation of host C.annuum leaves, and all the chlorotic areas gradually turn brown and become moderately necrotic at 7 days after inoculation. Leads only to chlorotic areas, without necrosis at 7 days after non-host N.benthamiana leaves infection. Induces cell death in hot pepper. This chain is NLP effector protein 1, found in Phytophthora capsici.